A 146-amino-acid polypeptide reads, in one-letter code: Basic phospholipase A2 (146 aa).

Positions 1–21 (MYPAHLLVLLAVCVSLLGAAS) are cleaved as a signal peptide. A propeptide spanning residues 22 to 27 (IPPLPL) is cleaved from the precursor. Intrachain disulfides connect Cys38-Cys98, Cys54-Cys145, Cys56-Cys72, Cys71-Cys126, Cys78-Cys119, Cys87-Cys112, and Cys105-Cys117. Ca(2+)-binding residues include Tyr55, Gly57, and Gly59. The active site involves His75. Asp76 is a Ca(2+) binding site. Asp120 is a catalytic residue.

This sequence belongs to the phospholipase A2 family. Group I subfamily. D49 sub-subfamily. Requires Ca(2+) as cofactor. As to expression, expressed by the venom gland.

The protein resides in the secreted. It catalyses the reaction a 1,2-diacyl-sn-glycero-3-phosphocholine + H2O = a 1-acyl-sn-glycero-3-phosphocholine + a fatty acid + H(+). In terms of biological role, snake venom phospholipase A2 (PLA2) that inhibits neuromuscular transmission by blocking acetylcholine release from the nerve termini. PLA2 catalyzes the calcium-dependent hydrolysis of the 2-acyl groups in 3-sn-phosphoglycerides. This is Basic phospholipase A2 from Hydrophis hardwickii (Hardwick's spine-bellied seasnake).